We begin with the raw amino-acid sequence, 219 residues long: Ribose-5-phosphate isomerase A (219 aa).

Substrate-binding positions include 28 to 31 (SGST), 81 to 84 (DGAD), and 94 to 97 (KGGG). Residue Glu-103 is the Proton acceptor of the active site. Lys-121 contributes to the substrate binding site.

Belongs to the ribose 5-phosphate isomerase family. In terms of assembly, homodimer.

It catalyses the reaction aldehydo-D-ribose 5-phosphate = D-ribulose 5-phosphate. It participates in carbohydrate degradation; pentose phosphate pathway; D-ribose 5-phosphate from D-ribulose 5-phosphate (non-oxidative stage): step 1/1. Functionally, catalyzes the reversible conversion of ribose-5-phosphate to ribulose 5-phosphate. The chain is Ribose-5-phosphate isomerase A from Haemophilus influenzae (strain PittGG).